Here is a 351-residue protein sequence, read N- to C-terminus: UDP-3-O-acylglucosamine N-acyltransferase (351 aa).

The active-site Proton acceptor is histidine 257.

The protein belongs to the transferase hexapeptide repeat family. LpxD subfamily. In terms of assembly, homotrimer.

It catalyses the reaction a UDP-3-O-[(3R)-3-hydroxyacyl]-alpha-D-glucosamine + a (3R)-hydroxyacyl-[ACP] = a UDP-2-N,3-O-bis[(3R)-3-hydroxyacyl]-alpha-D-glucosamine + holo-[ACP] + H(+). It functions in the pathway bacterial outer membrane biogenesis; LPS lipid A biosynthesis. In terms of biological role, catalyzes the N-acylation of UDP-3-O-acylglucosamine using 3-hydroxyacyl-ACP as the acyl donor. Is involved in the biosynthesis of lipid A, a phosphorylated glycolipid that anchors the lipopolysaccharide to the outer membrane of the cell. This Methylorubrum extorquens (strain PA1) (Methylobacterium extorquens) protein is UDP-3-O-acylglucosamine N-acyltransferase.